The chain runs to 412 residues: Cytochrome p450 CYP199A2 (412 aa).

Residues 94–97 (RPPS) and Ser-247 each bind substrate. Residue Cys-361 participates in heme binding.

It belongs to the cytochrome P450 family. In terms of assembly, interacts with the ferredoxin-like iron-sulfur protein ThcC. Heme serves as cofactor.

It localises to the cytoplasm. It catalyses the reaction 4-methoxybenzoate + AH2 + O2 = 4-hydroxybenzoate + formaldehyde + A + H2O. Functionally, the oxidative demethylation of 4-methoxybenzoate requires the participation of the monooxygenase CYP199A2, the ferredoxin-like protein ThcC/RPA1872 and a ferredoxin reductase to mediate the transfer of electrons from NADH to CYP199A2. It is also active with 4-ethylbenzoate. This is Cytochrome p450 CYP199A2 from Rhodopseudomonas palustris (strain ATCC BAA-98 / CGA009).